We begin with the raw amino-acid sequence, 415 residues long: Glutamyl-tRNA reductase (415 aa).

Residues 49–52 (TCNR), S104, 109–111 (EPQ), and Q115 each bind substrate. The active-site Nucleophile is C50. An NADP(+)-binding site is contributed by 184 to 189 (GAGEMI).

Belongs to the glutamyl-tRNA reductase family. Homodimer.

The catalysed reaction is (S)-4-amino-5-oxopentanoate + tRNA(Glu) + NADP(+) = L-glutamyl-tRNA(Glu) + NADPH + H(+). It functions in the pathway porphyrin-containing compound metabolism; protoporphyrin-IX biosynthesis; 5-aminolevulinate from L-glutamyl-tRNA(Glu): step 1/2. Its function is as follows. Catalyzes the NADPH-dependent reduction of glutamyl-tRNA(Glu) to glutamate 1-semialdehyde (GSA). The protein is Glutamyl-tRNA reductase of Neisseria meningitidis serogroup C (strain 053442).